Reading from the N-terminus, the 308-residue chain is HTH-type transcriptional activator AllS (308 aa).

In terms of domain architecture, HTH lysR-type spans 2–59 (FDPETLRTFIAVAETGSFSKAAERLCKTTATISYRIKLLEENTGVALFFRTTRSVTLT). The segment at residues 19–38 (FSKAAERLCKTTATISYRIK) is a DNA-binding region (H-T-H motif).

Belongs to the LysR transcriptional regulatory family.

Functionally, positive regulator essential for the expression of allD operon. Binds to the allD promoter. This is HTH-type transcriptional activator AllS (allS) from Escherichia coli O1:K1 / APEC.